A 513-amino-acid chain; its full sequence is Sterol 14-alpha demethylase (513 aa).

Residues 10-30 (FTLVSAYAAAGLLAIIVLNLL) form a helical membrane-spanning segment. N-linked (GlcNAc...) asparagine glycans are attached at residues Asn-37 and Asn-406. Cys-453 contributes to the heme binding site.

This sequence belongs to the cytochrome P450 family. Heme is required as a cofactor.

It is found in the endoplasmic reticulum membrane. It catalyses the reaction a 14alpha-methyl steroid + 3 reduced [NADPH--hemoprotein reductase] + 3 O2 = a Delta(14) steroid + formate + 3 oxidized [NADPH--hemoprotein reductase] + 4 H2O + 4 H(+). The enzyme catalyses a 14alpha-methyl steroid + reduced [NADPH--hemoprotein reductase] + O2 = a 14alpha-hydroxymethyl steroid + oxidized [NADPH--hemoprotein reductase] + H2O + H(+). The catalysed reaction is a 14alpha-hydroxymethyl steroid + reduced [NADPH--hemoprotein reductase] + O2 = a 14alpha-formyl steroid + oxidized [NADPH--hemoprotein reductase] + 2 H2O + H(+). It carries out the reaction a 14alpha-formyl steroid + reduced [NADPH--hemoprotein reductase] + O2 = a Delta(14) steroid + formate + oxidized [NADPH--hemoprotein reductase] + H2O + 2 H(+). It catalyses the reaction lanosterol + 3 reduced [NADPH--hemoprotein reductase] + 3 O2 = 4,4-dimethyl-5alpha-cholesta-8,14,24-trien-3beta-ol + formate + 3 oxidized [NADPH--hemoprotein reductase] + 4 H2O + 4 H(+). The enzyme catalyses lanosterol + reduced [NADPH--hemoprotein reductase] + O2 = 32-hydroxylanosterol + oxidized [NADPH--hemoprotein reductase] + H2O + H(+). The catalysed reaction is 32-hydroxylanosterol + reduced [NADPH--hemoprotein reductase] + O2 = 32-oxolanosterol + oxidized [NADPH--hemoprotein reductase] + 2 H2O + H(+). It carries out the reaction 32-oxolanosterol + reduced [NADPH--hemoprotein reductase] + O2 = 4,4-dimethyl-5alpha-cholesta-8,14,24-trien-3beta-ol + formate + oxidized [NADPH--hemoprotein reductase] + H2O + 2 H(+). It catalyses the reaction eburicol + 3 reduced [NADPH--hemoprotein reductase] + 3 O2 = 14-demethyleburicol + formate + 3 oxidized [NADPH--hemoprotein reductase] + 4 H2O + 4 H(+). The enzyme catalyses eburicol + reduced [NADPH--hemoprotein reductase] + O2 = 32-hydroxyeburicol + oxidized [NADPH--hemoprotein reductase] + H2O + H(+). The catalysed reaction is 32-hydroxyeburicol + reduced [NADPH--hemoprotein reductase] + O2 = 32-oxoeburicol + oxidized [NADPH--hemoprotein reductase] + 2 H2O + H(+). It carries out the reaction 32-oxoeburicol + reduced [NADPH--hemoprotein reductase] + O2 = 14-demethyleburicol + formate + oxidized [NADPH--hemoprotein reductase] + H2O + 2 H(+). The protein operates within steroid biosynthesis; sterol biosynthesis. Sterol 14alpha-demethylase, encoded by cyp51A, cyp51B and cyp51C, that plays a critical role in the third module of ergosterol biosynthesis pathway, being ergosterol the major sterol component in fungal membranes that participates in a variety of functions. The third module or late pathway involves the ergosterol synthesis itself through consecutive reactions that mainly occur in the endoplasmic reticulum (ER) membrane. In filamentous fungi, during the initial step of this module, lanosterol (lanosta-8,24-dien-3beta-ol) can be metabolized to eburicol. Sterol 14alpha-demethylase catalyzes the three-step oxidative removal of the 14alpha-methyl group (C-32) of both these sterols in the form of formate, and converts eburicol and lanosterol to 14-demethyleburicol (4,4,24-trimethylergosta-8,14,24(28)-trienol) and 4,4-dimethyl-5alpha-cholesta-8,14,24-trien-3beta-ol, respectively, which are further metabolized by other enzymes in the pathway to ergosterol. Can also use substrates not intrinsic to fungi, such as 24,25-dihydrolanosterol (DHL), producing 4,4'-dimethyl-8,14-cholestadien-3-beta-ol, but at lower rates than the endogenous substrates. In terms of biological role, as a target of azole drugs, plays a crucial role in azole susceptibility. This chain is Sterol 14-alpha demethylase, found in Aspergillus flavus (strain ATCC 200026 / FGSC A1120 / IAM 13836 / NRRL 3357 / JCM 12722 / SRRC 167).